A 364-amino-acid polypeptide reads, in one-letter code: Mitogen-activated protein kinase 11 (364 aa).

Residues 24-308 (LQGLRPVGSG…AAEALAHAYF (285 aa)) enclose the Protein kinase domain. Residues 30 to 38 (VGSGAYGSV) and Lys-53 each bind ATP. Nilotinib is bound at residue Glu-71. Asp-150 serves as the catalytic Proton acceptor. Position 180 is a phosphothreonine; by MAP2K3, MAP2K4 and MAP2K6 (Thr-180). The TXY signature appears at 180 to 182 (TGY). Position 182 is a phosphotyrosine; by MAP2K3, MAP2K4 and MAP2K6 (Tyr-182). 2 disordered regions span residues 311-331 (YHDPEDEPEAEPYDESVEAKE) and 343-364 (QEVLSFKPPEPPKPPGSLEIEQ). Acidic residues predominate over residues 314–326 (PEDEPEAEPYDES). Tyr-323 bears the Phosphotyrosine; by ZAP70 mark.

This sequence belongs to the protein kinase superfamily. CMGC Ser/Thr protein kinase family. MAP kinase subfamily. As to quaternary structure, interacts with HDAC3 and DUSP16. It depends on Mg(2+) as a cofactor. In terms of processing, dually phosphorylated on Thr-180 and Tyr-182 by MAP2K3/MKK3, MAP2K4/MKK4 and MAP2K6/MKK6, which activates the enzyme. In terms of tissue distribution, highest levels in the brain and heart. Also expressed in the placenta, lung, liver, skeletal muscle, kidney and pancreas.

It is found in the cytoplasm. The protein localises to the nucleus. It carries out the reaction L-seryl-[protein] + ATP = O-phospho-L-seryl-[protein] + ADP + H(+). The catalysed reaction is L-threonyl-[protein] + ATP = O-phospho-L-threonyl-[protein] + ADP + H(+). Its activity is regulated as follows. Activated by phosphorylation on threonine and tyrosine by MAP2K3/MKK3, MAP2K4/MKK4 and MAP2K6/MKK6. MAP2K3/MKK3 and MAP2K6/MKK6 are both essential for the activation of MAPK11 induced by environmental stress. HDAC3 interacts directly and selectively with MAPK11 to repress ATF2 transcriptional activity, and regulate TNF gene expression in LPS-stimulated cells. Inhibited by SB203580 and pyridinyl-imidazole related compounds. Functionally, serine/threonine kinase which acts as an essential component of the MAP kinase signal transduction pathway. MAPK11 is one of the four p38 MAPKs which play an important role in the cascades of cellular responses evoked by extracellular stimuli such as pro-inflammatory cytokines or physical stress leading to direct activation of transcription factors. Accordingly, p38 MAPKs phosphorylate a broad range of proteins and it has been estimated that they may have approximately 200 to 300 substrates each. MAPK11 functions are mostly redundant with those of MAPK14. Some of the targets are downstream kinases which are activated through phosphorylation and further phosphorylate additional targets. RPS6KA5/MSK1 and RPS6KA4/MSK2 can directly phosphorylate and activate transcription factors such as CREB1, ATF1, the NF-kappa-B isoform RELA/NFKB3, STAT1 and STAT3, but can also phosphorylate histone H3 and the nucleosomal protein HMGN1. RPS6KA5/MSK1 and RPS6KA4/MSK2 play important roles in the rapid induction of immediate-early genes in response to stress or mitogenic stimuli, either by inducing chromatin remodeling or by recruiting the transcription machinery. On the other hand, two other kinase targets, MAPKAPK2/MK2 and MAPKAPK3/MK3, participate in the control of gene expression mostly at the post-transcriptional level, by phosphorylating ZFP36 (tristetraprolin) and ELAVL1, and by regulating EEF2K, which is important for the elongation of mRNA during translation. MKNK1/MNK1 and MKNK2/MNK2, two other kinases activated by p38 MAPKs, regulate protein synthesis by phosphorylating the initiation factor EIF4E2. In the cytoplasm, the p38 MAPK pathway is an important regulator of protein turnover. For example, CFLAR is an inhibitor of TNF-induced apoptosis whose proteasome-mediated degradation is regulated by p38 MAPK phosphorylation. Ectodomain shedding of transmembrane proteins is regulated by p38 MAPKs as well. In response to inflammatory stimuli, p38 MAPKs phosphorylate the membrane-associated metalloprotease ADAM17. Such phosphorylation is required for ADAM17-mediated ectodomain shedding of TGF-alpha family ligands, which results in the activation of EGFR signaling and cell proliferation. Additional examples of p38 MAPK substrates are the FGFR1. FGFR1 can be translocated from the extracellular space into the cytosol and nucleus of target cells, and regulates processes such as rRNA synthesis and cell growth. FGFR1 translocation requires p38 MAPK activation. In the nucleus, many transcription factors are phosphorylated and activated by p38 MAPKs in response to different stimuli. Classical examples include ATF1, ATF2, ATF6, ELK1, PTPRH, DDIT3, TP53/p53 and MEF2C and MEF2A. The p38 MAPKs are emerging as important modulators of gene expression by regulating chromatin modifiers and remodelers. The promoters of several genes involved in the inflammatory response, such as IL6, IL8 and IL12B, display a p38 MAPK-dependent enrichment of histone H3 phosphorylation on 'Ser-10' (H3S10ph) in LPS-stimulated myeloid cells. This phosphorylation enhances the accessibility of the cryptic NF-kappa-B-binding sites marking promoters for increased NF-kappa-B recruitment. Phosphorylates NLRP1 downstream of MAP3K20/ZAK in response to UV-B irradiation and ribosome collisions, promoting activation of the NLRP1 inflammasome and pyroptosis. Phosphorylates methyltransferase DOT1L on 'Ser-834', 'Thr-900', 'Ser-902', 'Thr-984', 'Ser-1001', 'Ser-1009' and 'Ser-1104'. The polypeptide is Mitogen-activated protein kinase 11 (MAPK11) (Homo sapiens (Human)).